Reading from the N-terminus, the 467-residue chain is 3-isopropylmalate dehydratase large subunit (467 aa).

[4Fe-4S] cluster is bound by residues cysteine 347, cysteine 407, and cysteine 410. Positions 422-442 are enriched in polar residues; it reads QISASSSNRNFKGRQGSSSGR. The disordered stretch occupies residues 422-443; the sequence is QISASSSNRNFKGRQGSSSGRT.

The protein belongs to the aconitase/IPM isomerase family. LeuC type 1 subfamily. As to quaternary structure, heterodimer of LeuC and LeuD. Requires [4Fe-4S] cluster as cofactor.

The enzyme catalyses (2R,3S)-3-isopropylmalate = (2S)-2-isopropylmalate. The protein operates within amino-acid biosynthesis; L-leucine biosynthesis; L-leucine from 3-methyl-2-oxobutanoate: step 2/4. In terms of biological role, catalyzes the isomerization between 2-isopropylmalate and 3-isopropylmalate, via the formation of 2-isopropylmaleate. The polypeptide is 3-isopropylmalate dehydratase large subunit (Nostoc punctiforme (strain ATCC 29133 / PCC 73102)).